The primary structure comprises 65 residues: Beta-defensin 106A (65 aa).

The first 20 residues, Met-1–Glu-20, serve as a signal peptide directing secretion. 3 cysteine pairs are disulfide-bonded: Cys-26–Cys-53, Cys-33–Cys-47, and Cys-37–Cys-54.

The protein belongs to the beta-defensin family. In terms of assembly, monomer. Interacts with CCR2 (via extracellular N-terminal region); this interaction may preferentially require specific tyrosine sulfation on CCR2.

Its subcellular location is the secreted. It localises to the membrane. Its function is as follows. Has antibacterial activity. Acts as a ligand for C-C chemokine receptor CCR2. The sequence is that of Beta-defensin 106A (DEFB106A) from Pongo pygmaeus (Bornean orangutan).